The following is a 316-amino-acid chain: Ubiquinol oxidase, mitochondrial (316 aa).

The transit peptide at 1 to 26 (MGVRAQPLLARSLITTTQPWILSARS) directs the protein to the mitochondrion. Residues 124–144 (VHRAVVLETVAAVPGMVAGML) form a helical membrane-spanning segment. The Fe cation site is built by E131, E170, and H173. A helical membrane pass occupies residues 189 to 209 (MLVALVQTLFFNVYFLAYMLF). Fe cation contacts are provided by E221, E272, and H275.

It belongs to the alternative oxidase family. The cofactor is Fe cation.

It is found in the mitochondrion inner membrane. The enzyme catalyses 2 a ubiquinol + O2 = 2 a ubiquinone + 2 H2O. Alternative oxidase which function may be to reoxidize reducing equivalents produced by glycolysis such as ubiquinol. In Batrachochytrium dendrobatidis (strain JAM81 / FGSC 10211) (Frog chytrid fungus), this protein is Ubiquinol oxidase, mitochondrial (AOX).